We begin with the raw amino-acid sequence, 308 residues long: Exosporium protein A (308 aa).

The protein resides in the spore wall. This is Exosporium protein A from Clostridium sporogenes (strain ATCC 15579).